The primary structure comprises 257 residues: Ribosome-associated protein quality control protein P2 (257 aa).

An N-terminal domain region spans residues 1 to 74 (MSDIYQHFRK…RAERKRAILF (74 aa)). The tract at residues 87–166 (LQAFNVRYAD…EKIDLSDLNI (80 aa)) is central region. Residues 181-251 (LRLDAVCASM…GKTKKDKWRV (71 aa)) enclose the S4 RNA-binding domain.

As to quaternary structure, in the presence of chloramphenicol (a translation elongation inhibitor), but not erythromycin or lincomycin, associates with 50S ribosomal subunits with or without a tRNA in the P-site. The S4 domain binds in a similar position to RqcP.

The protein localises to the cytoplasm. Its function is as follows. Part of the ribosome quality control system (RQC), a ribosome-associated complex that mediates the extraction of incompletely synthesized nascent chains from stalled ribosomes and their subsequent degradation. RqcH recruits Ala-charged tRNA, and with RqcP directs the elongation of stalled nascent chains on 50S ribosomal subunits, leading to non-templated C-terminal alanine extensions (Ala tail). The Ala tail promotes nascent chain degradation. RqcP2 (YlmH) overexpression can compensate for RqcP's role in Ala tailing during RQC, restoring Ala tail addition to peptides in stalled ribosomes. Overexpression complements a double ssrA-rqcP double deletion, but not an ssrA-rqcH double deletion. In terms of biological role, the majority of tagged protein is associated with tRNA-less 50S subunits, suggesting it might also play a role in late stage 50S subunit biogenesis. In Bacillus subtilis (strain 168), this protein is Ribosome-associated protein quality control protein P2.